An 855-amino-acid polypeptide reads, in one-letter code: Photoactivated adenylate cyclase subunit beta-like protein 1224-5/9F (855 aa).

In terms of domain architecture, BLUF 1 spans 56–149 (LRRLMYLSKG…GRMSGVWHMK (94 aa)). The segment at 420–444 (RPPIFDDTPKCNPRPRTPGCEGRQR) is disordered. Residues 471 to 563 (VPTLTYISHA…RVYPSEWTLT (93 aa)) form the BLUF 2 domain. A compositionally biased stretch (basic and acidic residues) spans 813–827 (RSGEKPLTEPEEAKL). Residues 813 to 855 (RSGEKPLTEPEEAKLDFSPGRVRHGDSGRRSNSAQGKLSIQVR) form a disordered region. Residues 842–855 (RSNSAQGKLSIQVR) show a composition bias toward polar residues.

Heterotetramer of two alpha and two beta subunits.

It is found in the cell projection. Its subcellular location is the cilium. The protein resides in the flagellum. The protein is Photoactivated adenylate cyclase subunit beta-like protein 1224-5/9F of Euglena gracilis.